Consider the following 883-residue polypeptide: Alanine--tRNA ligase (883 aa).

Zn(2+) contacts are provided by histidine 564, histidine 568, cysteine 666, and histidine 670.

This sequence belongs to the class-II aminoacyl-tRNA synthetase family. It depends on Zn(2+) as a cofactor.

The protein resides in the cytoplasm. The enzyme catalyses tRNA(Ala) + L-alanine + ATP = L-alanyl-tRNA(Ala) + AMP + diphosphate. In terms of biological role, catalyzes the attachment of alanine to tRNA(Ala) in a two-step reaction: alanine is first activated by ATP to form Ala-AMP and then transferred to the acceptor end of tRNA(Ala). Also edits incorrectly charged Ser-tRNA(Ala) and Gly-tRNA(Ala) via its editing domain. The protein is Alanine--tRNA ligase of Synechococcus sp. (strain JA-3-3Ab) (Cyanobacteria bacterium Yellowstone A-Prime).